We begin with the raw amino-acid sequence, 389 residues long: MVTVNEIRQAQRAEGPATVFAIGTATPQNCVEQSTYPDFYFRITNSQHKTELKEKFQRMCDKSMIKKRYMHLTEEILKENPSLCEYMAPSLDARQDMVVVEVPKLGKEAATKAIKEWGQPKSKITHLIFCTTSGVDMPGADYQLTKLLGLRPYVKRYMMYQQGCFAGGTVLRLAKDLAENNKGARVLVVCSEITAVTFRGPSDTHLDSLVGQALFGDGAAAVIVGSDPLPDVEKPLFELVWTAQTIVPDSEGAIDGHLREAGLTFHLLKDVPSLVSKNIEKALVEAFQPLNISDYNSIFWIAHPGGPAILDQVEAKLGLKQRKMQATRHVLSEYGNMSSACVLFILDEMRRKSKEDGLATTGEGLEWGVLFGFGPGLTVETVLLHSMAT.

The active site involves Cys-164.

It belongs to the thiolase-like superfamily. Chalcone/stilbene synthases family.

It carries out the reaction (E)-4-coumaroyl-CoA + 3 malonyl-CoA + 3 H(+) = 2',4,4',6'-tetrahydroxychalcone + 3 CO2 + 4 CoA. It participates in secondary metabolite biosynthesis; flavonoid biosynthesis. Functionally, the primary product of this enzyme is 4,2',4',6'-tetrahydroxychalcone (also termed naringenin-chalcone or chalcone) which can under specific conditions spontaneously isomerize into naringenin. This Pisum sativum (Garden pea) protein is Chalcone synthase 1A (CHS-1A).